The chain runs to 91 residues: Small ribosomal subunit protein bS20 (91 aa).

Positions 1 to 21 (MPLHKSAEKRLRQSARRNERN) are enriched in basic and acidic residues. 2 disordered regions span residues 1–25 (MPLHKSAEKRLRQSARRNERNRARK) and 70–91 (PNKASRKKSQLSRMLNNYMKAE). The span at 70–79 (PNKASRKKSQ) shows a compositional bias: basic residues.

The protein belongs to the bacterial ribosomal protein bS20 family.

Its function is as follows. Binds directly to 16S ribosomal RNA. This Chlorobium phaeobacteroides (strain BS1) protein is Small ribosomal subunit protein bS20.